Here is a 346-residue protein sequence, read N- to C-terminus: Bifunctional phosphatase IMPL2, chloroplastic (346 aa).

The transit peptide at 1–61 (MLAQSHFFSK…VSRRRFCLTM (61 aa)) directs the protein to the chloroplast. 3 residues coordinate Mg(2+): Glu147, Asp165, and Asp168. Position 147 (Glu147) interacts with substrate. Residues 167–170 (IDGT), 263–265 (GCD), Glu282, and Asp289 each bind substrate. Asp289 is a Mg(2+) binding site.

It belongs to the inositol monophosphatase superfamily. Requires Mg(2+) as cofactor. In terms of tissue distribution, ubiquitous. High expression in roots. Expressed in pistil and seed endosperm.

The protein localises to the plastid. Its subcellular location is the chloroplast. The catalysed reaction is a myo-inositol phosphate + H2O = myo-inositol + phosphate. It catalyses the reaction L-histidinol phosphate + H2O = L-histidinol + phosphate. The enzyme catalyses beta-L-galactose 1-phosphate + H2O = L-galactose + phosphate. Its pathway is amino-acid biosynthesis; L-histidine biosynthesis; L-histidine from 5-phospho-alpha-D-ribose 1-diphosphate: step 8/9. It functions in the pathway polyol metabolism; myo-inositol biosynthesis; myo-inositol from D-glucose 6-phosphate: step 2/2. Functionally, phosphatase required for histidine production. Also acts on L-galactose 1-phosphate (L-Gal 1-P), D-myoinositol 3-phosphate (D-Ins 3-P) and D-myoinositol 1-phosphate (D-Ins 1-P). In Arabidopsis thaliana (Mouse-ear cress), this protein is Bifunctional phosphatase IMPL2, chloroplastic (HISN7).